The primary structure comprises 485 residues: Putative E3 ubiquitin-protein ligase makorin-4 (485 aa).

Residues 1–32 (MAEAAAPGTTVTTSGAGAAAAEAAETAEAVSP) show a composition bias toward low complexity. Residues 1-63 (MAEAAAPGTT…GSDGSGGRGD (63 aa)) form a disordered region. Residues 45–63 (AGGGVGGSDGSDGSGGRGD) show a composition bias toward gly residues. 3 C3H1-type zinc fingers span residues 90-117 (WTKQVTCRYFKYGICKEGDNCRYSHDLS), 124-146 (VCKYFQRGCCVYGDRCRCEHSKP), and 243-270 (ETKKQLCPYAAVGQCRYGENCVYLHGDL). The tract at residues 271–298 (CDMCGLQVLHPMDAAQRSQHIQACIEAH) is makorin-type Cys-His. An RING-type zinc finger spans residues 316–370 (CGICMEVVYEKANPNEHRFGILSNCNHTFCLKCIRKWRSAKEFESRIVKSCPQCR). The C3H1-type 4 zinc finger occupies 399–428 (AMSNKACKYFDEGRGSCPFGENCFYKHMYP).

It carries out the reaction S-ubiquitinyl-[E2 ubiquitin-conjugating enzyme]-L-cysteine + [acceptor protein]-L-lysine = [E2 ubiquitin-conjugating enzyme]-L-cysteine + N(6)-ubiquitinyl-[acceptor protein]-L-lysine.. The protein operates within protein modification; protein ubiquitination. Its function is as follows. May act as a E3 ubiquitin ligase catalyzing the covalent attachment of ubiquitin moieties onto substrate proteins. The sequence is that of Putative E3 ubiquitin-protein ligase makorin-4 (MKRN4P) from Homo sapiens (Human).